The primary structure comprises 337 residues: Casein kinase II subunit alpha (337 aa).

Residues 47–332 form the Protein kinase domain; the sequence is YEIIRKIGRG…TREAMEHPYF (286 aa). Residues 53-61 and Lys76 contribute to the ATP site; that span reads IGRGKYSEV. Residue Asp164 is the Proton acceptor of the active site.

This sequence belongs to the protein kinase superfamily. CMGC Ser/Thr protein kinase family. CK2 subfamily. In terms of assembly, tetramer of two alpha and two beta chains.

It carries out the reaction L-seryl-[protein] + ATP = O-phospho-L-seryl-[protein] + ADP + H(+). It catalyses the reaction L-threonyl-[protein] + ATP = O-phospho-L-threonyl-[protein] + ADP + H(+). Casein kinases are operationally defined by their preferential utilization of acidic proteins such as caseins as substrates. The alpha chain contains the catalytic site. The chain is Casein kinase II subunit alpha (casK) from Dictyostelium discoideum (Social amoeba).